A 193-amino-acid polypeptide reads, in one-letter code: MRNVFVGALCMCGMSFVFSDSVRSAAAAYFSHFSWVMPERVVQEHISWRYKALKQDHMEVDCDVYAYRGGRVFPRVSGMGVIDHTNIPHALRIFCEKMTDSFMKKKIDPHLCQRERKFLPHYFSFRMGKLPRICAVVFAQPNVMQGNFLTVHFKLNVENEDSRIIEVTVAKEQENWKLFQFLFKEDRAHLAVL.

The N-terminal stretch at 1–26 is a signal peptide; sequence MRNVFVGALCMCGMSFVFSDSVRSAA.

This is an uncharacterized protein from Treponema pallidum (strain Nichols).